We begin with the raw amino-acid sequence, 952 residues long: Valine--tRNA ligase (952 aa).

The 'HIGH' region motif lies at 45–55; that stretch reads PNVTGSLHMGH. A 'KMSKS' region motif is present at residues 571-575; that stretch reads KMSKS. Lys574 is an ATP binding site. A coiled-coil region spans residues 894 to 950; it reads KEIAKADADIARVDLKLADQNFIANAPGEIVEDEKEKREAAAARKAKFVEALERLKA.

The protein belongs to the class-I aminoacyl-tRNA synthetase family. ValS type 1 subfamily. Monomer.

It is found in the cytoplasm. The enzyme catalyses tRNA(Val) + L-valine + ATP = L-valyl-tRNA(Val) + AMP + diphosphate. Catalyzes the attachment of valine to tRNA(Val). As ValRS can inadvertently accommodate and process structurally similar amino acids such as threonine, to avoid such errors, it has a 'posttransfer' editing activity that hydrolyzes mischarged Thr-tRNA(Val) in a tRNA-dependent manner. This chain is Valine--tRNA ligase, found in Nitrobacter winogradskyi (strain ATCC 25391 / DSM 10237 / CIP 104748 / NCIMB 11846 / Nb-255).